Reading from the N-terminus, the 67-residue chain is Transcription elongation factor Spt4 (67 aa).

Positions 7, 10, 19, and 22 each coordinate Zn(2+).

It belongs to the archaeal Spt4 family. In terms of assembly, heterodimer composed of Spt4 and Spt5. Interacts with RNA polymerase (RNAP). The complex interacts with FttA.

It is found in the chromosome. In terms of biological role, the Stp4-Spt5 complex stimulates transcription elongation on both naked DNA and histone-bound DNA (chromatin), facilitating transcription through the histone barrier. Neither protein functions alone. The complex also stimulates the transcription termination activity of FttA, neither protein alone stimulates FttA-dependent termination. The protein is Transcription elongation factor Spt4 of Thermococcus kodakarensis (strain ATCC BAA-918 / JCM 12380 / KOD1) (Pyrococcus kodakaraensis (strain KOD1)).